The primary structure comprises 360 residues: Isopentenyl-diphosphate delta-isomerase (360 aa).

6–7 (RK) is a binding site for substrate. FMN-binding positions include Thr-62, 63 to 65 (GMT), Ser-93, and Asn-122. Position 93–95 (93–95 (SQR)) interacts with substrate. Gln-157 serves as a coordination point for substrate. Glu-158 is a Mg(2+) binding site. Residues Lys-189, Ser-214, Thr-219, 272-274 (GIR), and 293-294 (AL) each bind FMN.

This sequence belongs to the IPP isomerase type 2 family. In terms of assembly, homooctamer. Dimer of tetramers. FMN serves as cofactor. The cofactor is NADPH. It depends on Mg(2+) as a cofactor.

It is found in the cytoplasm. The enzyme catalyses isopentenyl diphosphate = dimethylallyl diphosphate. Its function is as follows. Involved in the biosynthesis of isoprenoids. Catalyzes the 1,3-allylic rearrangement of the homoallylic substrate isopentenyl (IPP) to its allylic isomer, dimethylallyl diphosphate (DMAPP). The sequence is that of Isopentenyl-diphosphate delta-isomerase from Ignicoccus hospitalis (strain KIN4/I / DSM 18386 / JCM 14125).